The following is a 352-amino-acid chain: UDP-N-acetylglucosamine--N-acetylmuramyl-(pentapeptide) pyrophosphoryl-undecaprenol N-acetylglucosamine transferase (352 aa).

Residues S195 and Q287 each contribute to the UDP-N-acetyl-alpha-D-glucosamine site.

The protein belongs to the glycosyltransferase 28 family. MurG subfamily.

Its subcellular location is the cell membrane. The catalysed reaction is Mur2Ac(oyl-L-Ala-gamma-D-Glu-L-Lys-D-Ala-D-Ala)-di-trans,octa-cis-undecaprenyl diphosphate + UDP-N-acetyl-alpha-D-glucosamine = beta-D-GlcNAc-(1-&gt;4)-Mur2Ac(oyl-L-Ala-gamma-D-Glu-L-Lys-D-Ala-D-Ala)-di-trans,octa-cis-undecaprenyl diphosphate + UDP + H(+). The protein operates within cell wall biogenesis; peptidoglycan biosynthesis. Its function is as follows. Cell wall formation. Catalyzes the transfer of a GlcNAc subunit on undecaprenyl-pyrophosphoryl-MurNAc-pentapeptide (lipid intermediate I) to form undecaprenyl-pyrophosphoryl-MurNAc-(pentapeptide)GlcNAc (lipid intermediate II). The sequence is that of UDP-N-acetylglucosamine--N-acetylmuramyl-(pentapeptide) pyrophosphoryl-undecaprenol N-acetylglucosamine transferase from Streptococcus pneumoniae (strain CGSP14).